The sequence spans 323 residues: PI-PLC X domain-containing protein 1 (323 aa).

The 177-residue stretch at 30-206 folds into the PI-PLC X-box domain; that stretch reads RLWDVPLHHL…QVIVSYEDES (177 aa).

In terms of tissue distribution, widely expressed.

It localises to the cytoplasm. This chain is PI-PLC X domain-containing protein 1 (PLCXD1), found in Homo sapiens (Human).